The sequence spans 283 residues: MKQYLDLCQRLIDEGTWVENSRTGKRCLTVINADLVYHVDKNEFPLITTRKSFYKAAIAELLGYIRGYDNAADFRAIGCNTWNANANDNQAWLDNPHRKGIDDMGRVYGVQGRAWSKPDGGCIDQLRKIVDDLSKGIDDRGEILSFYNPGEFHMGCLRPCMHTHNFSLVGDTLHLTSFQRSCDVPLGLNFNQVQVFTLLALMAQITGHKPGTAFHKIVNAHIYEDQLELMQEVQLKREPFTSPKLVINPNIKSLEDLETWVSIDDFEVTGYEHHEAISYPFSV.

Position 22 (R22) interacts with dUMP. C160 functions as the Nucleophile in the catalytic mechanism. DUMP contacts are provided by residues 180 to 183 (RSCD), N191, and 221 to 223 (HIY). D183 contacts (6R)-5,10-methylene-5,6,7,8-tetrahydrofolate. S282 lines the (6R)-5,10-methylene-5,6,7,8-tetrahydrofolate pocket.

This sequence belongs to the thymidylate synthase family. Bacterial-type ThyA subfamily. As to quaternary structure, homodimer.

The protein localises to the cytoplasm. It carries out the reaction dUMP + (6R)-5,10-methylene-5,6,7,8-tetrahydrofolate = 7,8-dihydrofolate + dTMP. Its pathway is pyrimidine metabolism; dTTP biosynthesis. Its function is as follows. Catalyzes the reductive methylation of 2'-deoxyuridine-5'-monophosphate (dUMP) to 2'-deoxythymidine-5'-monophosphate (dTMP) while utilizing 5,10-methylenetetrahydrofolate (mTHF) as the methyl donor and reductant in the reaction, yielding dihydrofolate (DHF) as a by-product. This enzymatic reaction provides an intracellular de novo source of dTMP, an essential precursor for DNA biosynthesis. The chain is Thymidylate synthase from Shewanella pealeana (strain ATCC 700345 / ANG-SQ1).